Here is a 420-residue protein sequence, read N- to C-terminus: Serine--tRNA ligase (420 aa).

Thr-229–Glu-231 serves as a coordination point for L-serine. Arg-260 to Glu-262 is an ATP binding site. Glu-283 is an L-serine binding site. An ATP-binding site is contributed by Glu-347–Ser-350. Residue Ser-382 participates in L-serine binding.

It belongs to the class-II aminoacyl-tRNA synthetase family. Type-1 seryl-tRNA synthetase subfamily. As to quaternary structure, homodimer. The tRNA molecule binds across the dimer.

The protein localises to the cytoplasm. The catalysed reaction is tRNA(Ser) + L-serine + ATP = L-seryl-tRNA(Ser) + AMP + diphosphate + H(+). It catalyses the reaction tRNA(Sec) + L-serine + ATP = L-seryl-tRNA(Sec) + AMP + diphosphate + H(+). The protein operates within aminoacyl-tRNA biosynthesis; selenocysteinyl-tRNA(Sec) biosynthesis; L-seryl-tRNA(Sec) from L-serine and tRNA(Sec): step 1/1. Its function is as follows. Catalyzes the attachment of serine to tRNA(Ser). Is also able to aminoacylate tRNA(Sec) with serine, to form the misacylated tRNA L-seryl-tRNA(Sec), which will be further converted into selenocysteinyl-tRNA(Sec). The chain is Serine--tRNA ligase from Caldicellulosiruptor bescii (strain ATCC BAA-1888 / DSM 6725 / KCTC 15123 / Z-1320) (Anaerocellum thermophilum).